The sequence spans 125 residues: Large ribosomal subunit protein bL12 (125 aa).

This sequence belongs to the bacterial ribosomal protein bL12 family. Homodimer. Part of the ribosomal stalk of the 50S ribosomal subunit. Forms a multimeric L10(L12)X complex, where L10 forms an elongated spine to which 2 to 4 L12 dimers bind in a sequential fashion. Binds GTP-bound translation factors.

Forms part of the ribosomal stalk which helps the ribosome interact with GTP-bound translation factors. Is thus essential for accurate translation. The polypeptide is Large ribosomal subunit protein bL12 (Rickettsia prowazekii (strain Madrid E)).